Consider the following 249-residue polypeptide: Acetylglutamate kinase (249 aa).

Residues 38-39, Arg-60, and Asn-147 contribute to the substrate site; that span reads GG.

It belongs to the acetylglutamate kinase family. ArgB subfamily.

The protein resides in the cytoplasm. The enzyme catalyses N-acetyl-L-glutamate + ATP = N-acetyl-L-glutamyl 5-phosphate + ADP. Its pathway is amino-acid biosynthesis; L-arginine biosynthesis; N(2)-acetyl-L-ornithine from L-glutamate: step 2/4. Its function is as follows. Catalyzes the ATP-dependent phosphorylation of N-acetyl-L-glutamate. This Deinococcus geothermalis (strain DSM 11300 / CIP 105573 / AG-3a) protein is Acetylglutamate kinase.